Reading from the N-terminus, the 573-residue chain is Urease subunit alpha 2 (573 aa).

Residues 135–573 (GGMDTHVHYI…ISLNQLYFFS (439 aa)) form the Urease domain. Ni(2+)-binding residues include His-140, His-142, and Lys-223. N6-carboxylysine is present on Lys-223. His-225 contacts substrate. Ni(2+) is bound by residues His-252 and His-278. The active-site Proton donor is the His-326. Asp-366 serves as a coordination point for Ni(2+).

This sequence belongs to the metallo-dependent hydrolases superfamily. Urease alpha subunit family. In terms of assembly, heterotrimer of UreA (gamma), UreB (beta) and UreC (alpha) subunits. Three heterotrimers associate to form the active enzyme. Requires Ni cation as cofactor. Carboxylation allows a single lysine to coordinate two nickel ions.

Its subcellular location is the cytoplasm. It carries out the reaction urea + 2 H2O + H(+) = hydrogencarbonate + 2 NH4(+). It functions in the pathway nitrogen metabolism; urea degradation; CO(2) and NH(3) from urea (urease route): step 1/1. Functionally, disrupting the ure2 operon has no effect on urease activity, or pathogen survival in BALB/c mice when inoculated by gavage, but confers slightly enhanced resistance to low pH killing in vitro. This Brucella suis biovar 1 (strain 1330) protein is Urease subunit alpha 2.